Here is a 358-residue protein sequence, read N- to C-terminus: Peptide chain release factor 1 (358 aa).

Gln-233 carries the post-translational modification N5-methylglutamine.

This sequence belongs to the prokaryotic/mitochondrial release factor family. Post-translationally, methylated by PrmC. Methylation increases the termination efficiency of RF1.

The protein localises to the cytoplasm. Functionally, peptide chain release factor 1 directs the termination of translation in response to the peptide chain termination codons UAG and UAA. This Blochmanniella floridana protein is Peptide chain release factor 1.